A 481-amino-acid polypeptide reads, in one-letter code: O-acetyltransferase andG (481 aa).

Belongs to the fumigaclavine B O-acetyltransferase family. Monomer.

The protein operates within secondary metabolite biosynthesis; terpenoid biosynthesis. Functionally, O-acetyltransferase; part of the gene cluster that mediates the biosynthesis of anditomin, a fungal meroterpenoid. The first step of the pathway is the synthesis of 3,5-dimethylorsellinic acid (DMOA) by the polyketide synthase andM. DMOA is then converted to the phthalide compound 5,7-dihydroxy-4,6-dimethylphthalide (DHDMP) by the cytochrome P450 monooxygenase andK, which is further prenylated by the prenyltransferase andD to yield farnesyl-DHDMP. Further epoxidation by the FAD-dependent monooxygenase andE leads to epoxyfarnesyl-DHDMP. The next step involves the terpene cyclase andB that converts epoxyfarnesyl-DHDMP into preandiloid A through opening of the epoxide ring followed by the cyclization of the farnesyl moiety. Preandiloid A is in turn oxidized at the C-3 hydroxyl group to yield preandiloid B by the dehydrogenase andC. The dioxygenase andA is solely responsible for the dehydrogenation of preandiloid B leading to the enone preandiloid C, as well as for the intriguing structural rearrangement to generate the bicyclo[2.2.2]octane core, transforming preandiloid C into andiconin. FAD-binding monooxygenase andJ then produces andilesin D which is reduced by dehydrogenase andI to yield andilesin A. Action of acetyltransferase andG followed by a spontaneous acetate elimination leads then to andilesin B, which is in turn substrate of the short chain dehydrogenase andH to yield andilesin C. Finally, the dioxygenase andF catalyzes the transformation of andilesin C to anditomin. The sequence is that of O-acetyltransferase andG from Emericella variicolor (Aspergillus stellatus).